The following is a 393-amino-acid chain: Sugar efflux transporter B (393 aa).

12 consecutive transmembrane segments (helical) span residues 13–33 (FDLTSTAFLIVAFLTGIAGAL), 51–71 (AMVGFFFTGSAVIGILVSQFL), 82–102 (KSLIVFCCLLGVLACTLFAWN), 106–126 (FVLLFVGVFLSSFGSTANPQM), 152–172 (VSLAWVIGPPLAYALAMGFSF), 174–194 (VMYLSAAVAFIVCGVMVWLFL), 219–239 (LLLFVICTLMWGSNSLYIINM), 253–273 (LAGVMMGTAAGLEIPTMLIAG), 283–303 (FLMRVAAVGGVCFYAGMLMAH), 306–326 (VILLGLQLLNAIFIGILGGIG), 344–364 (LYTNTSRVGWIIAGSVAGIVA), and 366–386 (IWNYHAVFWFAMVMIIATLFC).

Belongs to the major facilitator superfamily. Set transporter family.

The protein resides in the cell inner membrane. Involved in the efflux of sugars. The physiological role may be the detoxification of non-metabolizable sugar analogs. Can transport lactose and glucose. The protein is Sugar efflux transporter B (setB) of Escherichia coli (strain K12).